Here is a 247-residue protein sequence, read N- to C-terminus: DNA polymerase sliding clamp (247 aa).

It belongs to the PCNA family. Homotrimer. The subunits circularize to form a toroid; DNA passes through its center. Replication factor C (RFC) is required to load the toroid on the DNA.

Its function is as follows. Sliding clamp subunit that acts as a moving platform for DNA processing. Responsible for tethering the catalytic subunit of DNA polymerase and other proteins to DNA during high-speed replication. In Halobacterium salinarum (strain ATCC 29341 / DSM 671 / R1), this protein is DNA polymerase sliding clamp.